The sequence spans 158 residues: Endoribonuclease YbeY (158 aa).

The Zn(2+) site is built by histidine 117, histidine 121, and histidine 127.

It belongs to the endoribonuclease YbeY family. Requires Zn(2+) as cofactor.

The protein localises to the cytoplasm. In terms of biological role, single strand-specific metallo-endoribonuclease involved in late-stage 70S ribosome quality control and in maturation of the 3' terminus of the 16S rRNA. This Buchnera aphidicola subsp. Schizaphis graminum (strain Sg) protein is Endoribonuclease YbeY.